Reading from the N-terminus, the 3930-residue chain is MQDLIAIVGSACRFPGQSDSPSKLWTRLKEPIDLRKTFPPQRLNLARFYHPDGEHHGSTDVRGTSYLLSEDPRQFDASFFNINPREAEGMDPQQRLLLETAFEALEAAGYSLEAMNGSKTSVHVGVMNSDFSNIQLRDPEVLPTYNATGTAISILSNRLSYFFNLKGPSVTIDTACSSSLVALHQAVQGLRAGDATAAIVAGANLIFDPAMYIAESSLHMLSPDSCSRMWDKDANGYARGEGVGVLVLKPLSRAIMDGDHVEAVIRSTGVNSDGRTKGITMPNAESQTELIRQTYRDAGLDPIRDRCQYFECHGTGTATGDPIEARAVHDAFFPTETRTASNTLIPDGKLYVGSVKTIIGHLEGCAGIAGVLKAVLAIKNRTIPPNMHFHEPNPRVIPFCDRLEIPTVPIPWPDTGRSPLRASINSFGFGGTNAHAIIEGYDALSSPVREATITPDDLFIGPLLFSANSSSSLVANVKNMAERIRSDPSIDLESLVWTLYARRSVLPVKAFFTGGTVQRLLNFMDRFVAESEETTSSTAGIKYQPLNPTETPGILGIFTGQGAQWALMGFSLLQQNHVFRAAIERCQAALATLHDSPSWSLLDELVKGADESRIGEAALSQPLCTALQIGLVDMLHSAGIKLDAVVGHSSGEIAAVYAAGIINADAAIKIAYYRGYYAKLAAGARGQAGRMMATAMSFDEAEEFCAQPQWRGRLAAAASNSPQSVTLSGDIDAIEEALQLFEAEKKFARILRTDTAYHSHHMQPCAERYLKSLQACQIKVSPPRKDCVWISSVRGDTQLLEGDLSTLADQYWVDNMCNPVLFSQAVETSIWNGGPFDVAVELGPHPALKGPVEQTIKAVYGPIPAYAGLMRRGDNEIEAFSGGVGFVWSRLGPDYVDMSGYRKGFIGADRLRPQVLKDLPVYCWDHSKLYWKESRISRQYRLRQDTPHELLGRRVPDDSDDSRRWRNVLRLSELPWIRGHVFQGQVLFPGAGYVAMALEAARELTEGRPATLFEIENVSLRRALVISEQAGIETAFTARVIDAKEGRNDTNRLEADFACYFCSAEGNEPLVKACTGRLIINYGDPAAEALPQRTRLPSNNVPVDMGRFYDAMNSVGLDYQGIFRGLVHGKRSLGCSSVKAAWGEDMQIDNYVVNPGFLDVAFQSVYTAFSSPASGEIWAPYLPIHIERLAVNPNVSYRSAKDEVQMEADAFVTVSNSTLLKGDIQLYQIDSQHAAIQVEGISMKSMSEPQPENDRCLFSETVWGPDVSLGVSEVTSRATEDDTPLVEALDRVSLFYWQNLLQEVGAEEIAQFQWYHQRMFDAVRFQVSSVRSGQHPIAKPEWLEDDWETILAVSEPYASRVDMRLIHAVGENLASVVREDTQLLEVMVQDDMLNRFYMEGYGFSVINNAVSDALEQITFKYPHANILEIGAGTGGTTRSILDRIGSRYGSYTYTDISPAFFEAAAEKFEDAREKIQFKVLDVEKEVGAQGFDEHGYDVIVAANVLHATRKLEETMKNARALLKPGGYLVLMEITGPDVLRTQFIMGGLPGWWYGVDDGRVLSPAISAQQWNQLLLDTGFSGLDCLAPDMLDEYKHSFSLMVSQAIDEKIQMLRDPVLSKTLLPAADVLIIGGRTHSNVIHEIRRYLSAWTSRVEVWDRIQTKQLDQLAEFENIICLEELDQPLFSTTMTSETLLALQKVLSGTKNVVWAINSAKSQNPHVNMTVGLGRAMRTEVPGLNLLFVDIDAVENPIACAQLLSQMLLQLRTGSLTAAENTLWAAELEIRVQDGRRLIPRVLPMTQMNETYNASRRVISKPVDIETTCVKMEDSAGSLRLVPGACMVDGPVQRGHNRLRIHRSLPLAFGGGTPCYLCSGDLRENGLPALALSTSNANLADIPNDMVFALDQDQPCDAAMLEATGRQLLARDICNRLPASNRILVYQPSHDFAQALLLTGRHFSFVSADKASCFSDWVYIHSRASRRAIQSRLPKDFDALIDCTGELPENLIACLSRNCRVLNMTLHQLDGSLLGPAYSAALAHVSSSSIGPSIRVKDLPLATPSKLPMVDWTGVDTVELTLQPLSMRKLFSSSATYLLAGMTGDLGLSLCRWMIDNGARNIALTSRNPNVGEELLQDMRRSGADIRVFRNDITDQNAVRTLVENIRLSMPPIAGVFNACMVLRDGLFSEMDVDTLNDPLAPKVDGSKILDDIFQDDSLDFFVLFSSLASIIGNAANPTTTLQTCSSLVLPPTAARRVWQPSPHNSSRQHEIILGLEPFIDSPNATKRPPWEHNPMFSHYVSRPLLQETPAATTVEAAADVKQLLRSTVSGEAVIPIVQEAFARKLESMMQLPANSINLNVPLIDLGCDSLLAIEIRRWFIKELGIDVPVLKVLSGDTTAQICEDAVRQFLALQLEKQDTVAPNMTEKPETKSHPSSNATIIDNDALDKADAANGDYESSSQGDDSRGNSSSSSSHTSPSIQATTPDIKPNTPVPLDVDADPLGRGFQRTMIRAEPASFAQSRLWFLTQYLHDPTTYNVTVRYDVRGNLPASRIVSSLNRTICHHQSLQTCFFMDSDKETLMQGVLSPSYSSIKHIPSGSEQTVREEYNRLRSRVWDLQKGETFAVTVVSLSPEQHTIIFGYHHIVMDGVSWHLFLRDLDLAYRLRPLPSIEMEYIDWSKKQFQSAQRGDFTRPLEYWRKQHSPPPSVMPLLPMAQTSSRKPLTSYDSHVISVQIDRQLVSHIRLVSQSLGVTPFHFHLAVIQSILCRLLKTEDLCIGVVDANRTSEAHSGTVGFFLNLLPVRFTTREHSTFQDLVSSTKRTILGAISNSEAPFDLILEDLKVLRSIEHSPLFQVAVNYRMGAMLQVPLGDGTMEVAAADDAKNPYDLSFGITETSTGTCLLELTSQKQLYTEQSTELLLQMYMDVLRASSDNPSLPVNQLPVTLEPSTGKALAVAKGPRAEYSWPNTLWERYDAIRKSFPEETAIKDGKSELSYSQLTRSVEKLAAMLISQGVTAGDSVGVLLHPSIDAIACMLALLRVGCIYTPLDTRLPVARLSIIVNRSKSSLVLYHASTHDVALELGKFSKLANVEDMCESGQAQVPAIAPQSNPASFLFYTSGSTGTPKGILLSQQNFVNHLAAKTDKLNLGREVVLQQSSLGFDMSVVQTFCALGNGGTLVIAPKEARGDPIALSTIMAKERVTLTIATPSEYSLLLRFGLEQLQRPYSWRHACMGGEVVSRQLVQQFCQLDHPDLQLTNCYGPTEITAAATFQDISLQMKDQSTTDGSLVGKALPNYSVYIMDASSGSPVPIGVTGEICIGGAGVSLGYLNSLEQTDAKFVRDPFASPEDITRGWTKMYRTGDMGCLTEDGTLIFMGRMDGDNQVKLNGLRIELDEIANSILTTGNDLVSEAVVTVHSGSGSGSPLLVAHVVPLGDNVDNSRLQQLARDLPLPQYMLPSVVVSLDRLPINANGKVDRKAIMALPLPTQRTESAAGTGTDTARHLSLAEGELRLLWEKVLPASGGPSRLDADSDFFMRGGTSMLLVRLQGAIKESIGVSIPVAELYQFPTLGQMARRISRRKEDHQASHATVINWDSETALTQDLIYAAKNQFSTRQTKAHDRQDILLTGSTSFLGKNILQSLLHNPLVERVHCVAVPAEDIPRLPASEKISIYTGSLLTPSLGLTKTEIAVLQSSLDVIIHAGSTGHCLNNYSSLRASNVDSTKFLAAIALLCRIPIHFISSNRVTLLSGSTSLPPASVSSSLPNTDGSEGFTASKWASERLLESVANLASGLPVTIHRPCAVFGEEAPNEDALNALLKYSKLTRCVPRFENFEGYLDFEDVHRVAATIAADALSAESRESKSAARVRHHSSGHKVSMKDFKGRMETLFACPFKEVSMAEWTERALQAGIDPLITGYLEAMTMKGEIIRFPYMGEAGSL.

The Ketosynthase family 3 (KS3) domain maps to 2–440; the sequence is QDLIAIVGSA…GTNAHAIIEG (439 aa). Active-site for beta-ketoacyl synthase activity residues include cysteine 176, histidine 313, and histidine 361. The malonyl-CoA:ACP transacylase (MAT) domain stretch occupies residues 557 to 879; the sequence is IFTGQGAQWA…MRRGDNEIEA (323 aa). The interval 948–1085 is N-terminal hotdog fold; that stretch reads HELLGRRVPD…GRLIINYGDP (138 aa). The segment at 948–1251 is dehydratase (DH) domain; that stretch reads HELLGRRVPD…SMKSMSEPQP (304 aa). The PKS/mFAS DH domain occupies 948–1252; the sequence is HELLGRRVPD…MKSMSEPQPE (305 aa). Catalysis depends on histidine 980, which acts as the Proton acceptor; for dehydratase activity. The tract at residues 1100-1252 is C-terminal hotdog fold; sequence NVPVDMGRFY…MKSMSEPQPE (153 aa). Residue aspartate 1159 is the Proton donor; for dehydratase activity of the active site. The segment at 1389-1588 is methyltransferase (MT) domain; that stretch reads QDDMLNRFYM…FSGLDCLAPD (200 aa). Residues 2088–2229 are ketoreductase (KR) domain; the sequence is ATYLLAGMTG…SLASIIGNAA (142 aa). A Carrier 1 domain is found at 2326–2403; sequence AVIPIVQEAF…QICEDAVRQF (78 aa). An O-(pantetheine 4'-phosphoryl)serine modification is found at serine 2363. Disordered stretches follow at residues 2414 to 2433 and 2444 to 2494; these read VAPN…SNAT and DAAN…VDAD. Over residues 2445–2473 the composition is skewed to low complexity; that stretch reads AANGDYESSSQGDDSRGNSSSSSSHTSPS. Residues 2509–2937 are condensation (C) domain; the sequence is PASFAQSRLW…SLPVNQLPVT (429 aa). Residues 2971-3371 are adenylation (A) (KR) domain; sequence KSFPEETAIK…GTLIFMGRMD (401 aa). The segment at 2971-3371 is reductase (RED) domain; it reads KSFPEETAIK…GTLIFMGRMD (401 aa). The region spanning 3493–3572 is the Carrier 2 domain; the sequence is RHLSLAEGEL…QMARRISRRK (80 aa). Position 3532 is an O-(pantetheine 4'-phosphoryl)serine (serine 3532).

The protein in the C-terminal section; belongs to the NRP synthetase family.

It participates in secondary metabolite biosynthesis. In terms of biological role, hybrid PKS-NRPS synthetase; part of the gene cluster that mediates the biosynthesis of aspyridones. The polyketide-amino acid backbone preaspyridone A is first assembled by the PKS-NRPS hybrid apdA. The assembly of preaspyridone A is initiated by loading of malonyl-CoA onto apdA, followed by decarboxylation to yield the acetyl starter unit. The growing polyketide chain then elongates into a tetraketide. The adpA PKS module catalyzes three Claisen condensations, as well as beta-keto processing and methylation. Alpha-methylation step during polyketide synthesis is a prerequisite and a key checkpoint for chain transfer between PKS and NRPS modules. The downstream NRPS module contains the condensation (C), adenylation (A), and thiolation (T) domains and catalyzes the incorporation of tyrosine via the formation of the L-tyrosinyl-thioester and the amide linkage between L-tyrosinyl-thioester and the tetraketide. The bimodular assembly line is terminated with a reductase (R) domain that facilitates formation and release of the tetramic acid product. Because apdA lacks a designated enoylreductase (ER) domain, the required activity is provided the enoyl reductase apdC. ApdC appears to operate with different stereoselectivity in different PKS cycle. Combined with apdC, apdA is proposed to synthesize preaspyridone A via about 20 enzymatic steps. A number of oxidative steps performed successively by the cytochrome P450 monooxygenases apdE and apdB are required for the conversion of preaspyridone A to aspyridone A. The cytochrome P450 monooxygenase apdE is responsible for the oxidative dephenylation of preaspyridone A. Finally, the predicted FAD-dependent monooxygenase apdD and the acyl-CoA dehydrogenase apdG may be involved in the transformation of aspyridone A into aspyridone B. The protein is Hybrid PKS-NRPS synthetase apdA of Emericella nidulans (strain FGSC A4 / ATCC 38163 / CBS 112.46 / NRRL 194 / M139) (Aspergillus nidulans).